Consider the following 103-residue polypeptide: Large ribosomal subunit protein uL24 (103 aa).

Belongs to the universal ribosomal protein uL24 family. In terms of assembly, part of the 50S ribosomal subunit.

In terms of biological role, one of two assembly initiator proteins, it binds directly to the 5'-end of the 23S rRNA, where it nucleates assembly of the 50S subunit. One of the proteins that surrounds the polypeptide exit tunnel on the outside of the subunit. This Halalkalibacterium halodurans (strain ATCC BAA-125 / DSM 18197 / FERM 7344 / JCM 9153 / C-125) (Bacillus halodurans) protein is Large ribosomal subunit protein uL24.